Reading from the N-terminus, the 348-residue chain is Phosphate acyltransferase (348 aa).

Belongs to the PlsX family. Homodimer. Probably interacts with PlsY.

It is found in the cytoplasm. It carries out the reaction a fatty acyl-[ACP] + phosphate = an acyl phosphate + holo-[ACP]. Its pathway is lipid metabolism; phospholipid metabolism. Its function is as follows. Catalyzes the reversible formation of acyl-phosphate (acyl-PO(4)) from acyl-[acyl-carrier-protein] (acyl-ACP). This enzyme utilizes acyl-ACP as fatty acyl donor, but not acyl-CoA. The polypeptide is Phosphate acyltransferase (Francisella tularensis subsp. novicida (strain U112)).